A 331-amino-acid polypeptide reads, in one-letter code: PIN2/TERF1-interacting telomerase inhibitor 1 (331 aa).

3 disordered regions span residues 1–28 (MSML…DDSK), 156–175 (AQDG…LTTT), and 197–331 (SKSQ…KVSR). Positions 26–72 (DSKFGQKMLEKMGWSKGKGLGAQEQGATEHIKVKVKNNHLGLGATNN) constitute a G-patch domain. Serine 233 carries the post-translational modification Phosphoserine. The span at 236–246 (HKAKRHKKKKR) shows a compositional bias: basic residues. A compositionally biased stretch (basic and acidic residues) spans 247–261 (VEAERGPAAKKRDQV). Residues 254–328 (AAKKRDQVEL…DSAPVKKKKK (75 aa)) are telomerase inhibitory domain (TID). Residues serine 269, serine 274, and serine 277 each carry the phosphoserine modification. The TBM signature appears at 291–301 (QDDVPKPRKRR). Residues 297-306 (PRKRRAKKTL) show a composition bias toward basic residues.

This sequence belongs to the PINX1 family. Interacts with MCRS1, TERT, TERF1, NCL/nucleolin, and the telomerase RNA.

It is found in the nucleus. Its subcellular location is the nucleolus. It localises to the chromosome. The protein resides in the telomere. The protein localises to the centromere. It is found in the kinetochore. In terms of biological role, microtubule-binding protein essential for faithful chromosome segregation. Mediates TRF1 and TERT accumulation in nucleolus and enhances TRF1 binding to telomeres. Inhibits telomerase activity. May inhibit cell proliferation and act as tumor suppressor. In Rattus norvegicus (Rat), this protein is PIN2/TERF1-interacting telomerase inhibitor 1.